The following is a 200-amino-acid chain: Cation channel sperm-associated auxiliary subunit zeta (200 aa).

Basic and acidic residues predominate over residues 1-29; sequence MEEKPSKVSLKSSDRQGSDEESVHSDTRD. Disordered stretches follow at residues 1-31 and 58-78; these read MEEK…RDLW and NISK…EGYK.

As to quaternary structure, component of the CatSper complex or CatSpermasome composed of the core pore-forming members CATSPER1, CATSPER2, CATSPER3 and CATSPER4 as well as auxiliary members CATSPERB, CATSPERG, CATSPERD, CATSPERE, CATSPERZ, C2CD6/CATSPERT, TMEM249, TMEM262 and EFCAB9. HSPA1 may be an additional auxiliary complex member. The core complex members CATSPER1, CATSPER2, CATSPER3 and CATSPER4 form a heterotetrameric channel. The auxiliary CATSPERB, CATSPERG, CATSPERD and CATSPERE subunits form a pavilion-like structure over the pore which stabilizes the complex through interactions with CATSPER4, CATSPER3, CATSPER1 and CATSPER2 respectively. TMEM262/CATSPERH interacts with CATSPERB, further stabilizing the complex. C2CD6/CATSPERT interacts at least with CATSPERD and is required for targeting the CatSper complex in the flagellar membrane. Interacts with EFCAB9; the interaction is direct, Ca(2+)-dependent and connects EFCAB9 with the CatSper complex. Dissociates from EFCAB9 at elevated pH.

The protein resides in the cell projection. It localises to the cilium. The protein localises to the flagellum membrane. In terms of biological role, auxiliary component of the CatSper complex, a complex involved in sperm cell hyperactivation. Sperm cell hyperactivation is needed for sperm motility which is essential late in the preparation of sperm for fertilization. Required for a distribution of the CatSper complex in linear quadrilateral nanodomains along the flagellum, maximizing fertilization inside the mammalian female reproductive tract. Together with EFCAB9, associates with the CatSper channel pore and is required for the two-row structure of each single CatSper channel. The protein is Cation channel sperm-associated auxiliary subunit zeta of Homo sapiens (Human).